We begin with the raw amino-acid sequence, 275 residues long: Shikimate dehydrogenase (NADP(+)) (275 aa).

Residues 16–18 (SKS) and Thr63 contribute to the shikimate site. Catalysis depends on Lys67, which acts as the Proton acceptor. Shikimate-binding residues include Asn88 and Asp104. NADP(+) contacts are provided by residues 129–133 (GAGGA), 153–158 (NRTVAR), and Met219. Shikimate is bound at residue Tyr221. Gly243 serves as a coordination point for NADP(+).

The protein belongs to the shikimate dehydrogenase family. In terms of assembly, homodimer.

It carries out the reaction shikimate + NADP(+) = 3-dehydroshikimate + NADPH + H(+). It participates in metabolic intermediate biosynthesis; chorismate biosynthesis; chorismate from D-erythrose 4-phosphate and phosphoenolpyruvate: step 4/7. Functionally, involved in the biosynthesis of the chorismate, which leads to the biosynthesis of aromatic amino acids. Catalyzes the reversible NADPH linked reduction of 3-dehydroshikimate (DHSA) to yield shikimate (SA). The polypeptide is Shikimate dehydrogenase (NADP(+)) (Marinobacter nauticus (strain ATCC 700491 / DSM 11845 / VT8) (Marinobacter aquaeolei)).